The sequence spans 93 residues: Pyrimidine/purine nucleoside phosphorylase (93 aa).

It belongs to the nucleoside phosphorylase PpnP family.

The enzyme catalyses a purine D-ribonucleoside + phosphate = a purine nucleobase + alpha-D-ribose 1-phosphate. It catalyses the reaction adenosine + phosphate = alpha-D-ribose 1-phosphate + adenine. The catalysed reaction is cytidine + phosphate = cytosine + alpha-D-ribose 1-phosphate. It carries out the reaction guanosine + phosphate = alpha-D-ribose 1-phosphate + guanine. The enzyme catalyses inosine + phosphate = alpha-D-ribose 1-phosphate + hypoxanthine. It catalyses the reaction thymidine + phosphate = 2-deoxy-alpha-D-ribose 1-phosphate + thymine. The catalysed reaction is uridine + phosphate = alpha-D-ribose 1-phosphate + uracil. It carries out the reaction xanthosine + phosphate = alpha-D-ribose 1-phosphate + xanthine. Catalyzes the phosphorolysis of diverse nucleosides, yielding D-ribose 1-phosphate and the respective free bases. Can use uridine, adenosine, guanosine, cytidine, thymidine, inosine and xanthosine as substrates. Also catalyzes the reverse reactions. This chain is Pyrimidine/purine nucleoside phosphorylase, found in Shewanella pealeana (strain ATCC 700345 / ANG-SQ1).